The following is a 410-amino-acid chain: Peptidase T (410 aa).

Position 79 (His79) interacts with Zn(2+). Asp81 is a catalytic residue. Asp142 provides a ligand contact to Zn(2+). Glu176 functions as the Proton acceptor in the catalytic mechanism. Zn(2+) contacts are provided by Glu177, Asp199, and His381.

This sequence belongs to the peptidase M20B family. It depends on Zn(2+) as a cofactor.

The protein resides in the cytoplasm. It catalyses the reaction Release of the N-terminal residue from a tripeptide.. Cleaves the N-terminal amino acid of tripeptides. This chain is Peptidase T, found in Listeria monocytogenes serotype 4a (strain HCC23).